The chain runs to 234 residues: MEKKDMLYEGKAKKIFRTDDKDTVVVYYKDDATAFNGEKKGTIEDKGVMNNSITAMLFELLEKKGVKTHFIEKINEREQLCKKVEIVPLEVIVRNIAAGSMAKILGLSEGRKLDTTVFEISYKNDDLNDPLINDYHAVAIGLTNFEELKEMYSIAEKVNNTLKEFFDEQGINLVDFKIEIGRFNGELLLADEISPDTCRLWDKKTGEKLDKDRFRRDMGNVKEAYMEILKRVNK.

This sequence belongs to the SAICAR synthetase family.

The catalysed reaction is 5-amino-1-(5-phospho-D-ribosyl)imidazole-4-carboxylate + L-aspartate + ATP = (2S)-2-[5-amino-1-(5-phospho-beta-D-ribosyl)imidazole-4-carboxamido]succinate + ADP + phosphate + 2 H(+). It functions in the pathway purine metabolism; IMP biosynthesis via de novo pathway; 5-amino-1-(5-phospho-D-ribosyl)imidazole-4-carboxamide from 5-amino-1-(5-phospho-D-ribosyl)imidazole-4-carboxylate: step 1/2. In Clostridium botulinum (strain Langeland / NCTC 10281 / Type F), this protein is Phosphoribosylaminoimidazole-succinocarboxamide synthase.